The primary structure comprises 250 residues: Protein KPLCE (250 aa).

Skin-specific.

This Homo sapiens (Human) protein is Protein KPLCE.